Here is a 125-residue protein sequence, read N- to C-terminus: Large ribosomal subunit protein bL12 (125 aa).

It belongs to the bacterial ribosomal protein bL12 family. In terms of assembly, homodimer. Part of the ribosomal stalk of the 50S ribosomal subunit. Forms a multimeric L10(L12)X complex, where L10 forms an elongated spine to which 2 to 4 L12 dimers bind in a sequential fashion. Binds GTP-bound translation factors.

Its function is as follows. Forms part of the ribosomal stalk which helps the ribosome interact with GTP-bound translation factors. Is thus essential for accurate translation. This Methylibium petroleiphilum (strain ATCC BAA-1232 / LMG 22953 / PM1) protein is Large ribosomal subunit protein bL12.